The primary structure comprises 992 residues: UPF0182 protein MT3285 (992 aa).

A run of 7 helical transmembrane segments spans residues 17-39 (RILI…LIDA), 59-81 (LATR…FGGL), 113-135 (LVGI…SYWA), 169-191 (LMLS…AHYI), 212-229 (LVSL…AYWL), 255-277 (VLPA…FSAI), and 284-306 (IPAI…WPLI). The disordered stretch occupies residues 906-938 (PTEAAVPPSPAANPPPPASGPQPPPVTAAPPVP). A compositionally biased stretch (pro residues) spans 912 to 938 (PPSPAANPPPPASGPQPPPVTAAPPVP).

It belongs to the UPF0182 family.

Its subcellular location is the cell membrane. The chain is UPF0182 protein MT3285 from Mycobacterium tuberculosis (strain CDC 1551 / Oshkosh).